The following is a 141-amino-acid chain: Meiotically up-regulated gene 118 protein (141 aa).

Residues 106 to 115 are compositionally biased toward polar residues; sequence LSSQKSARQP. The segment at 106 to 141 is disordered; it reads LSSQKSARQPTKTVASSSSSSSKSTTVSKSSSKSQV. Residues 116 to 141 show a composition bias toward low complexity; that stretch reads TKTVASSSSSSSKSTTVSKSSSKSQV.

Its subcellular location is the nucleus. In terms of biological role, has a role in meiosis. The chain is Meiotically up-regulated gene 118 protein (mug118) from Schizosaccharomyces pombe (strain 972 / ATCC 24843) (Fission yeast).